The sequence spans 402 residues: Phosphoglycerate kinase (402 aa).

Substrate contacts are provided by residues 30-32, Arg46, 70-73, Arg126, and Arg159; these read DFN and HLGR. ATP is bound by residues Lys210, Glu332, and 358 to 361; that span reads GGDT.

This sequence belongs to the phosphoglycerate kinase family. Monomer.

It localises to the cytoplasm. It catalyses the reaction (2R)-3-phosphoglycerate + ATP = (2R)-3-phospho-glyceroyl phosphate + ADP. It participates in carbohydrate degradation; glycolysis; pyruvate from D-glyceraldehyde 3-phosphate: step 2/5. The protein is Phosphoglycerate kinase of Helicobacter hepaticus (strain ATCC 51449 / 3B1).